Reading from the N-terminus, the 254-residue chain is Probable derlin-2 homolog (254 aa).

The Cytoplasmic portion of the chain corresponds to 1–17 (MAQPFEDWYKNLPIVTK). Residues 18 to 38 (IYMTGCVVTSVSVYLGLVGPL) traverse the membrane as a helical segment. Residues 39 to 95 (RLYLNFPLVFGKYEFWRLFTNFFFYDEIGMNFFFHMYFLVRHSRLLEESSFRGRSAD) are Lumenal-facing. Residues 96–116 (YLFMWIFGSFLLLIMDAFLFY) form a helical membrane-spanning segment. Over 117–118 (TK) the chain is Cytoplasmic. Residues 119 to 139 (IVTKVLFLAPSIAFMVIYVWS) form a helical membrane-spanning segment. The Lumenal portion of the chain corresponds to 140 to 146 (RRNPNMH). Residues 147 to 167 (ISFLGLFTFSAPYLPWVILIM) form a helical membrane-spanning segment. Topologically, residues 168-254 (GYLFNHDLTT…FLNEDDLDQQ (87 aa)) are cytoplasmic.

It belongs to the derlin family.

The protein localises to the endoplasmic reticulum membrane. May be involved in the degradation process of specific misfolded endoplasmic reticulum (ER) luminal proteins. May also be involved in endoplasmic reticulum stress-induced pre-emptive quality control, a mechanism that selectively attenuates the translocation of newly synthesized proteins into the endoplasmic reticulum and reroutes them to the cytosol for proteasomal degradation. The protein is Probable derlin-2 homolog (derl2) of Dictyostelium discoideum (Social amoeba).